The following is a 440-amino-acid chain: uncharacterized protein (440 aa).

This is an uncharacterized protein from Rickettsia conorii (strain ATCC VR-613 / Malish 7).